The following is a 500-amino-acid chain: Glycerol kinase (500 aa).

Position 12 (Thr12) interacts with ADP. Residues Thr12, Thr13, and Ser14 each contribute to the ATP site. Thr12 lines the sn-glycerol 3-phosphate pocket. An ADP-binding site is contributed by Arg16. Sn-glycerol 3-phosphate-binding residues include Arg82, Glu83, Tyr135, and Asp245. The glycerol site is built by Arg82, Glu83, Tyr135, Asp245, and Gln246. ADP contacts are provided by Thr267 and Gly310. Residues Thr267, Gly310, Gln314, and Gly411 each contribute to the ATP site. 2 residues coordinate ADP: Gly411 and Asn415.

This sequence belongs to the FGGY kinase family. In terms of assembly, homotetramer and homodimer (in equilibrium).

It catalyses the reaction glycerol + ATP = sn-glycerol 3-phosphate + ADP + H(+). It functions in the pathway polyol metabolism; glycerol degradation via glycerol kinase pathway; sn-glycerol 3-phosphate from glycerol: step 1/1. With respect to regulation, activated by phosphorylation and inhibited by fructose 1,6-bisphosphate (FBP). Its function is as follows. Key enzyme in the regulation of glycerol uptake and metabolism. Catalyzes the phosphorylation of glycerol to yield sn-glycerol 3-phosphate. This Clostridium perfringens (strain 13 / Type A) protein is Glycerol kinase.